Consider the following 296-residue polypeptide: 4-hydroxybenzoate octaprenyltransferase (296 aa).

8 consecutive transmembrane segments (helical) span residues 29-49 (IGIYLLLWPTLWSLWIAADGV), 55-75 (LLIFVLGVILMRAAGCVINDF), 102-122 (AWITFAVLVALSFGLVLLTNA), 146-166 (YYPQVVLGAAYSWGILMAFTA), 169-189 (GELPASAWLLFLANVLWTVAY), 219-239 (LIIGSLQGLTLLLLALAGSRF), 241-261 (LGLYFYLGLAVAAACFVWEAW), and 275-295 (FLHNHWAGLAIFLGTVADYAL).

Belongs to the UbiA prenyltransferase family. It depends on Mg(2+) as a cofactor.

The protein resides in the cell inner membrane. It catalyses the reaction all-trans-octaprenyl diphosphate + 4-hydroxybenzoate = 4-hydroxy-3-(all-trans-octaprenyl)benzoate + diphosphate. It participates in cofactor biosynthesis; ubiquinone biosynthesis. In terms of biological role, catalyzes the prenylation of para-hydroxybenzoate (PHB) with an all-trans polyprenyl group. Mediates the second step in the final reaction sequence of ubiquinone-8 (UQ-8) biosynthesis, which is the condensation of the polyisoprenoid side chain with PHB, generating the first membrane-bound Q intermediate 3-octaprenyl-4-hydroxybenzoate. This Pseudomonas aeruginosa (strain UCBPP-PA14) protein is 4-hydroxybenzoate octaprenyltransferase.